A 218-amino-acid polypeptide reads, in one-letter code: Small ribosomal subunit protein uS3c (218 aa).

One can recognise a KH type-2 domain in the interval 47–118; that stretch reads VQKNIRISSG…KLNIAITRIS (72 aa).

It belongs to the universal ribosomal protein uS3 family. Part of the 30S ribosomal subunit.

The protein localises to the plastid. Its subcellular location is the chloroplast. This Crucihimalaya wallichii (Rock-cress) protein is Small ribosomal subunit protein uS3c (rps3).